The chain runs to 171 residues: Shikimate kinase (171 aa).

11–16 (GTGKTT) contributes to the ATP binding site. Thr15 contributes to the Mg(2+) binding site. Residues Asp33, Arg57, and Gly79 each contribute to the substrate site. Arg117 contributes to the ATP binding site. Arg136 is a binding site for substrate.

Belongs to the shikimate kinase family. As to quaternary structure, monomer. Mg(2+) is required as a cofactor.

It is found in the cytoplasm. The catalysed reaction is shikimate + ATP = 3-phosphoshikimate + ADP + H(+). Its pathway is metabolic intermediate biosynthesis; chorismate biosynthesis; chorismate from D-erythrose 4-phosphate and phosphoenolpyruvate: step 5/7. Functionally, catalyzes the specific phosphorylation of the 3-hydroxyl group of shikimic acid using ATP as a cosubstrate. This Caldanaerobacter subterraneus subsp. tengcongensis (strain DSM 15242 / JCM 11007 / NBRC 100824 / MB4) (Thermoanaerobacter tengcongensis) protein is Shikimate kinase.